The chain runs to 99 residues: Plastocyanin (99 aa).

A Plastocyanin-like domain is found at 1–99 (LDVLLGSDDG…AGMVGKVTVN (99 aa)). The Cu cation site is built by histidine 37, cysteine 84, histidine 87, and methionine 92.

Belongs to the plastocyanin family. Requires Cu(2+) as cofactor.

It is found in the plastid. The protein localises to the chloroplast thylakoid membrane. Participates in electron transfer between P700 and the cytochrome b6-f complex in photosystem I. In Mercurialis perennis (Dog's mercury), this protein is Plastocyanin (PETE).